The following is a 373-amino-acid chain: 4-hydroxy-3-methylbut-2-en-1-yl diphosphate synthase (flavodoxin) (373 aa).

The [4Fe-4S] cluster site is built by Cys-270, Cys-273, Cys-305, and Glu-312.

Belongs to the IspG family. [4Fe-4S] cluster serves as cofactor.

It catalyses the reaction (2E)-4-hydroxy-3-methylbut-2-enyl diphosphate + oxidized [flavodoxin] + H2O + 2 H(+) = 2-C-methyl-D-erythritol 2,4-cyclic diphosphate + reduced [flavodoxin]. Its pathway is isoprenoid biosynthesis; isopentenyl diphosphate biosynthesis via DXP pathway; isopentenyl diphosphate from 1-deoxy-D-xylulose 5-phosphate: step 5/6. In terms of biological role, converts 2C-methyl-D-erythritol 2,4-cyclodiphosphate (ME-2,4cPP) into 1-hydroxy-2-methyl-2-(E)-butenyl 4-diphosphate. The protein is 4-hydroxy-3-methylbut-2-en-1-yl diphosphate synthase (flavodoxin) of Erwinia tasmaniensis (strain DSM 17950 / CFBP 7177 / CIP 109463 / NCPPB 4357 / Et1/99).